A 379-amino-acid chain; its full sequence is Stimulator of interferon genes protein (379 aa).

2 consecutive transmembrane segments (helical) span residues 18–38 and 43–63; these read AKKA…DLGE and ILQW…FKGV. Residues Cys-88 and Cys-91 are each lipidated (S-palmitoyl cysteine). The next 2 membrane-spanning stretches (helical) occupy residues 89 to 109 and 114 to 134; these read LGCP…YTPF and HLPF…SILL. Positions 153–340 are cyclic dinucleotide-binding domain (CBD); the sequence is LNVAQGMAWS…RHLKQEEKEE (188 aa). 4 residues coordinate 2',3'-cGAMP: Ser-162, Tyr-167, Arg-238, and Thr-263. 3',3'-c-di-GMP is bound by residues Ser-162, Tyr-167, 238–241, and Thr-263; that span reads RVYT. The 2',3'-cUAMP site is built by Tyr-167, Arg-238, and Thr-263. Residues 338-363 are disordered; the sequence is KEEVTVDSARTSVMPDPSMLPQGPEL. The segment at 340 to 379 is C-terminal tail (CTT); that stretch reads EVTVDSARTSVMPDPSMLPQGPELLISSMDQPLPLRTDVF. Ser-355 is modified (phosphoserine). The short motif at 363–366 is the pLxIS motif element; that stretch reads LLIS. A Phosphoserine; by TBK1 modification is found at Ser-366.

The protein belongs to the STING family. As to quaternary structure, homodimer; forms a homodimer in absence of cyclic nucleotide (c-di-GMP or cGAMP). Homotetramer; in presence of cyclic nucleotide (c-di-GMP or cGAMP), forms tetramers and higher-order oligomers through side-by-side packing. Interacts (when phosphorylated) with IRF3; following activation and phosphorylation on the pLxIS motif by TBK1, recruits IRF3. Interacts with TBK1; when homodimer, leading to subsequent production of IFN-beta. Interacts (via transmembrane domain) with TMEM203. Post-translationally, phosphorylation by TBK1 leads to activation and production of IFN-beta. Following cyclic nucleotide (c-di-GMP or cGAMP)-binding, activation and translocation from the endoplasmic reticulum, STING1 is phosphorylated by TBK1 at Ser-366 in the pLxIS motif. The phosphorylated pLxIS motif constitutes an IRF3-binding motif, leading to recruitment of the transcription factor IRF3 to induce type-I interferons and other cytokines. In contrast, lacks phosphorylation site at position 358, leading to reduced production of type-I interferons and other cytokines.

The protein localises to the endoplasmic reticulum membrane. It localises to the cytoplasm. The protein resides in the perinuclear region. Its subcellular location is the endoplasmic reticulum-Golgi intermediate compartment membrane. It is found in the golgi apparatus membrane. The protein localises to the cytoplasmic vesicle. It localises to the autophagosome membrane. The protein resides in the mitochondrion outer membrane. Its subcellular location is the cell membrane. The catalysed reaction is H(+)(in) = H(+)(out). Its function is as follows. Facilitator of innate immune signaling that acts as a sensor of cytosolic DNA from bacteria and viruses and promotes low production of type I interferon (IFN-alpha and IFN-beta). Compared to other mammals, STING1-dependent type I interferon induction is strongly reduced in bats, suggesting that the cGAS-STING pathway promotes a limited inflammatory response. Innate immune response is triggered in response to non-CpG double-stranded DNA from viruses and bacteria delivered to the cytoplasm. Acts by binding cyclic dinucleotides: recognizes and binds cyclic di-GMP (c-di-GMP), a second messenger produced by bacteria, cyclic UMP-AMP (2',3'-cUAMP), and cyclic GMP-AMP (cGAMP), a messenger produced by CGAS in response to DNA virus in the cytosol. Upon binding to c-di-GMP, cUAMP or cGAMP, STING1 oligomerizes, translocates from the endoplasmic reticulum and is phosphorylated by TBK1 on the pLxIS motif, leading to recruitment and subsequent activation of the transcription factor IRF3 to induce expression of type I interferon and exert a potent anti-viral state. In addition to promote the production of type I interferons, plays a direct role in autophagy. Following cGAMP-binding, STING1 buds from the endoplasmic reticulum into COPII vesicles, which then form the endoplasmic reticulum-Golgi intermediate compartment (ERGIC). The ERGIC serves as the membrane source for WIPI2 recruitment and LC3 lipidation, leading to formation of autophagosomes that target cytosolic DNA or DNA viruses for degradation by the lysosome. Promotes autophagy by acting as a proton channel that directs proton efflux from the Golgi to facilitate MAP1LC3B/LC3B lipidation. The autophagy- and interferon-inducing activities can be uncoupled and autophagy induction is independent of TBK1 phosphorylation. The polypeptide is Stimulator of interferon genes protein (Pteronotus parnellii (Parnell's mustached bat)).